A 335-amino-acid polypeptide reads, in one-letter code: Fructokinase-2 (335 aa).

The protein belongs to the carbohydrate kinase PfkB family. As to expression, expressed in roots, at higher levels in stems, and hardly detectable in leaves.

The enzyme catalyses D-fructose + ATP = D-fructose 6-phosphate + ADP + H(+). Its pathway is glycan biosynthesis; starch biosynthesis. With respect to regulation, inhibited at high fructose. Its function is as follows. May play an important role in maintaining the flux of carbon towards starch formation. May also be involved in a sugar-sensing pathway. This Zea mays (Maize) protein is Fructokinase-2 (FRK2).